The sequence spans 514 residues: Importin subunit alpha-3 (514 aa).

One can recognise an IBB domain in the interval 1–51 (MSSNRQAYYKNNAKEQIGKEKRNEEVVSIRKDKREEAISKRRNINTQIEDD). The interval 1–62 (MSSNRQAYYK…ETSTTPPGPF (62 aa)) is disordered. A compositionally biased stretch (basic and acidic residues) spans 12 to 39 (NAKEQIGKEKRNEEVVSIRKDKREEAIS). ARM repeat units lie at residues 101 to 142 (IDDL…TSEQ), 143 to 187 (TQAV…FRDY), 188 to 226 (CLEL…CKDP), 227 to 271 (APSP…EHIQ), 272 to 311 (MVIE…TDEQ), 312 to 353 (TQLV…NQQQ), 354 to 393 (VQDV…ISGR), and 394 to 436 (PNQV…KMAG). Residues 485 to 514 (GNVEGAQSSAFGGDVPPVPDAPNGGWNFGK) are disordered.

It belongs to the importin alpha family. Forms a complex with an importin beta subunit. May interact with transcription factor cebp-1 (via N-terminus). Interacts with cmk-1; affinity for cmk-1 is increased in the presence of Ca(2+) and calmodulin and leads to increased nuclear accumulation of cmk-1 in FLP neurons upon prolonged heat activation. As to expression, expressed in larval and adult germline and somatic tissues, including neurons.

The protein localises to the cytoplasm. The protein resides in the nucleus. Functionally, binds specifically and directly to substrates containing either a simple or bipartite NLS motif. Promotes docking of import substrates to the nuclear envelope. Seems to act as a cytosolic receptor for both simple and bipartite NLS motifs. Necessary for correct nucleoporin localization within the germline. Essential gene for embryonic and larval development. May be dispensable for axon development, but required for axon regeneration in both mechanosensory and motor neurons. Required for oogenic development, ima-1 and ima-2 cannot functionally compensate for loss of ima-3. The polypeptide is Importin subunit alpha-3 (ima-3) (Caenorhabditis elegans).